We begin with the raw amino-acid sequence, 119 residues long: Large ribosomal subunit protein uL18 (119 aa).

The protein belongs to the universal ribosomal protein uL18 family. Part of the 50S ribosomal subunit; part of the 5S rRNA/L5/L18/L25 subcomplex. Contacts the 5S and 23S rRNAs.

Functionally, this is one of the proteins that bind and probably mediate the attachment of the 5S RNA into the large ribosomal subunit, where it forms part of the central protuberance. The sequence is that of Large ribosomal subunit protein uL18 from Cupriavidus necator (strain ATCC 17699 / DSM 428 / KCTC 22496 / NCIMB 10442 / H16 / Stanier 337) (Ralstonia eutropha).